Here is a 162-residue protein sequence, read N- to C-terminus: Deoxyuridine 5'-triphosphate nucleotidohydrolase (162 aa).

This sequence belongs to the dUTPase family. In terms of assembly, homotrimer. The cofactor is Mg(2+).

It localises to the host cytoplasm. It is found in the virion. It catalyses the reaction dUTP + H2O = dUMP + diphosphate + H(+). The viral dUTPase may play a role in lowering the dUTP concentration in natural infections to minimize misincorporation of deoxyuridine into the viral DNA and ensure the fidelity of genome replication. In Ornithodoros (relapsing fever ticks), this protein is Deoxyuridine 5'-triphosphate nucleotidohydrolase.